An 889-amino-acid polypeptide reads, in one-letter code: DNA mismatch repair protein MutS (889 aa).

An ATP-binding site is contributed by 620-627; it reads GPNMAGKS. Positions 812–831 are disordered; it reads AAAPSGAARRGRPAREKEPG.

Belongs to the DNA mismatch repair MutS family.

This protein is involved in the repair of mismatches in DNA. It is possible that it carries out the mismatch recognition step. This protein has a weak ATPase activity. This is DNA mismatch repair protein MutS from Syntrophobacter fumaroxidans (strain DSM 10017 / MPOB).